Reading from the N-terminus, the 909-residue chain is Protein translocase subunit SecA (909 aa).

Residues Q87, 105 to 109 (GEGKT), and D507 each bind ATP. The interval 857-909 (DTHSELAEEQPPVAENRENKQQPFVRKNEKVGRNDPCPCGSGKKYKQCHGKLN) is disordered. Positions 871–889 (ENRENKQQPFVRKNEKVGR) are enriched in basic and acidic residues. Residues C893, C895, C904, and H905 each coordinate Zn(2+). Over residues 899-909 (KKYKQCHGKLN) the composition is skewed to basic residues.

It belongs to the SecA family. In terms of assembly, monomer and homodimer. Part of the essential Sec protein translocation apparatus which comprises SecA, SecYEG and auxiliary proteins SecDF-YajC and YidC. The cofactor is Zn(2+).

The protein localises to the cell inner membrane. The protein resides in the cytoplasm. The enzyme catalyses ATP + H2O + cellular proteinSide 1 = ADP + phosphate + cellular proteinSide 2.. In terms of biological role, part of the Sec protein translocase complex. Interacts with the SecYEG preprotein conducting channel. Has a central role in coupling the hydrolysis of ATP to the transfer of proteins into and across the cell membrane, serving both as a receptor for the preprotein-SecB complex and as an ATP-driven molecular motor driving the stepwise translocation of polypeptide chains across the membrane. This chain is Protein translocase subunit SecA, found in Nitrosomonas europaea (strain ATCC 19718 / CIP 103999 / KCTC 2705 / NBRC 14298).